Here is a 360-residue protein sequence, read N- to C-terminus: Chorismate synthase (360 aa).

Arg48 and Arg54 together coordinate NADP(+). FMN-binding positions include 125–127 (RSS), 242–243 (NG), Gly283, 298–302 (KPTSS), and Arg324.

This sequence belongs to the chorismate synthase family. In terms of assembly, homotetramer. Requires FMNH2 as cofactor.

It carries out the reaction 5-O-(1-carboxyvinyl)-3-phosphoshikimate = chorismate + phosphate. The protein operates within metabolic intermediate biosynthesis; chorismate biosynthesis; chorismate from D-erythrose 4-phosphate and phosphoenolpyruvate: step 7/7. Catalyzes the anti-1,4-elimination of the C-3 phosphate and the C-6 proR hydrogen from 5-enolpyruvylshikimate-3-phosphate (EPSP) to yield chorismate, which is the branch point compound that serves as the starting substrate for the three terminal pathways of aromatic amino acid biosynthesis. This reaction introduces a second double bond into the aromatic ring system. The polypeptide is Chorismate synthase (Gluconobacter oxydans (strain 621H) (Gluconobacter suboxydans)).